A 303-amino-acid polypeptide reads, in one-letter code: Heme A synthase (303 aa).

Residues 1-8 are Cytoplasmic-facing; it reads MFGKKNLK. Residues 9 to 29 form a helical membrane-spanning segment; sequence WLGVVATLMMTFVQLGGALVT. The Extracellular segment spans residues 30-67; that stretch reads KTGSADGCGSSWPLCHGALIPEFFPIDTIIELSHRAVS. An intrachain disulfide couples Cys37 to Cys44. Residue Glu60 is part of the active site. His63 is a binding site for heme o. Residues 68–88 form a helical membrane-spanning segment; it reads ALSLLMVLWLVITAWKHIGYI. The Cytoplasmic portion of the chain corresponds to 89 to 93; sequence KEIKP. The helical transmembrane segment at 94–114 threads the bilayer; sequence LSIISVGFLLLQALIGAAAVI. The Extracellular segment spans residues 115–125; it reads WQQNDYVLALH. Heme o is bound at residue His125. A helical transmembrane segment spans residues 126–146; the sequence is FGISLISFSSVFLITLIIFSI. Residues 147–163 lie on the Cytoplasmic side of the membrane; the sequence is DQKYEADELYIKKPLRR. A helical transmembrane segment spans residues 164–184; sequence LTWLMAIIIYCGVYTGALVRH. Residues 185 to 215 lie on the Extracellular side of the membrane; that stretch reads ADASLAYGGWPLPFHDLVPHSEQDWVQLTHR. His214 is a binding site for heme b. A helical membrane pass occupies residues 216–236; sequence IMAFIVFTIIMITYIHAVKNY. At 237–244 the chain is on the cytoplasmic side; it reads PNNRTVHY. The chain crosses the membrane as a helical span at residues 245–265; sequence GYTAAFILVILQVITGALSIM. Residues 266-270 lie on the Extracellular side of the membrane; sequence TNVNL. A helical membrane pass occupies residues 271–291; that stretch reads IIALFHALFITYLFGMTTYFI. A heme b-binding site is contributed by His276. The Cytoplasmic portion of the chain corresponds to 292–303; the sequence is MLMLRSVRSDKQ.

Belongs to the COX15/CtaA family. Type 1 subfamily. Interacts with CtaB. Heme b is required as a cofactor.

It localises to the cell membrane. It catalyses the reaction Fe(II)-heme o + 2 A + H2O = Fe(II)-heme a + 2 AH2. Its pathway is porphyrin-containing compound metabolism; heme A biosynthesis; heme A from heme O: step 1/1. Functionally, catalyzes the conversion of heme O to heme A by two successive hydroxylations of the methyl group at C8. The first hydroxylation forms heme I, the second hydroxylation results in an unstable dihydroxymethyl group, which spontaneously dehydrates, resulting in the formyl group of heme A. In Staphylococcus aureus (strain Mu3 / ATCC 700698), this protein is Heme A synthase.